Reading from the N-terminus, the 262-residue chain is Ribosomal RNA small subunit methyltransferase A (262 aa).

The S-adenosyl-L-methionine site is built by His19, Leu21, Gly44, Glu65, Asp90, and Asn109. The tract at residues 218–246 (LPNNLPGPLRERAEEALAGLGHGPDARAE) is disordered.

This sequence belongs to the class I-like SAM-binding methyltransferase superfamily. rRNA adenine N(6)-methyltransferase family. RsmA subfamily.

The protein localises to the cytoplasm. It carries out the reaction adenosine(1518)/adenosine(1519) in 16S rRNA + 4 S-adenosyl-L-methionine = N(6)-dimethyladenosine(1518)/N(6)-dimethyladenosine(1519) in 16S rRNA + 4 S-adenosyl-L-homocysteine + 4 H(+). In terms of biological role, specifically dimethylates two adjacent adenosines (A1518 and A1519) in the loop of a conserved hairpin near the 3'-end of 16S rRNA in the 30S particle. May play a critical role in biogenesis of 30S subunits. The sequence is that of Ribosomal RNA small subunit methyltransferase A from Rubrobacter xylanophilus (strain DSM 9941 / JCM 11954 / NBRC 16129 / PRD-1).